We begin with the raw amino-acid sequence, 60 residues long: UPF0434 protein Vapar_2640 (60 aa).

The protein belongs to the UPF0434 family.

In Variovorax paradoxus (strain S110), this protein is UPF0434 protein Vapar_2640.